The chain runs to 285 residues: Undecaprenyl-diphosphatase 2 (285 aa).

8 helical membrane-spanning segments follow: residues 5–25 (MDLLHVFILAVIQGLAELLPV), 47–67 (MTFLLVMLHTGTMFAVIVYFW), 86–106 (WYVLLATAITGVLGLLLQSLI), 122–142 (LFSNSKLMAAALAAAGILIIL), 156–176 (LPSAMIIGAVQALCLPFRGFS), 198–218 (FSFALAVVLTPAVIVKELVRL), 235–255 (SLLLPSIFGMVFSFLTGLLAL), and 265–285 (GRWYLFGIYCLAFSGVVLTLA).

It belongs to the UppP family.

Its subcellular location is the cell inner membrane. The catalysed reaction is di-trans,octa-cis-undecaprenyl diphosphate + H2O = di-trans,octa-cis-undecaprenyl phosphate + phosphate + H(+). Catalyzes the dephosphorylation of undecaprenyl diphosphate (UPP). Confers resistance to bacitracin. The sequence is that of Undecaprenyl-diphosphatase 2 from Acinetobacter baylyi (strain ATCC 33305 / BD413 / ADP1).